A 443-amino-acid chain; its full sequence is MAAAPPPPPPLLLLLLCVCAVFADVPIGTQPEQVHISYPGVQNSMLVTWSSANKTDSVVEYGLWGGKLFSHSATGNSSIFINEGAEYRVMYIHRVLLTDLRPAASYVYHCGSGAGWSELFFFTALNESVFFSPGFALFGDLGNENPQSLSRLQKETQIGTYDVILHIGDFAYDLYEDNGRIGDEFMKQIQSIAAYVPYMTCPGNHEWAFNFSQYRARFSMPGDTEGLWYSWNVGPAHIISFSTEVYFYYLEYGLDLLFRQYEWLRADLQEANRPENRAERPWIITMGHRPMYCSNDDDDDCTHFQSYVRLGRNDTKPPAPGLEELFYQYGVDLELWAHEHTYERLWPVYDYKVFNGSSEEPYVNPKAPVHIITGSAGCREKHDGFIPKPRDWSAFRSTDYGYTRLQLINNTHLYLEQVSDDQYGKVIDQMTLVKEKHGPDAWR.

A signal peptide spans 1–23 (MAAAPPPPPPLLLLLLCVCAVFA). Asn53, Asn76, and Asn126 each carry an N-linked (GlcNAc...) asparagine glycan. Fe cation is bound by residues Asp140, Asp169, and Tyr172. Asp169 is a binding site for Zn(2+). Asn204 lines the Zn(2+) pocket. N-linked (GlcNAc...) asparagine glycosylation is present at Asn210. A Zn(2+)-binding site is contributed by His288. An N-linked (GlcNAc...) asparagine glycan is attached at Asn313. His338 is a binding site for Zn(2+). His340 provides a ligand contact to Fe cation. N-linked (GlcNAc...) asparagine glycosylation is found at Asn355 and Asn409.

This sequence belongs to the metallophosphoesterase superfamily. Purple acid phosphatase family. Fe cation serves as cofactor. It depends on Zn(2+) as a cofactor.

Its subcellular location is the secreted. It catalyses the reaction a phosphate monoester + H2O = an alcohol + phosphate. This Danio rerio (Zebrafish) protein is Acid phosphatase type 7.